Consider the following 168-residue polypeptide: Ribosome maturation factor RimP (168 aa).

The protein belongs to the RimP family.

It is found in the cytoplasm. Its function is as follows. Required for maturation of 30S ribosomal subunits. This chain is Ribosome maturation factor RimP, found in Syntrophobacter fumaroxidans (strain DSM 10017 / MPOB).